A 250-amino-acid polypeptide reads, in one-letter code: 4-hydroxy-tetrahydrodipicolinate reductase (250 aa).

Residues 10 to 15, 78 to 80, and 105 to 108 each bind NAD(+); these read GVKGRI, GTT, and APNF. Histidine 135 acts as the Proton donor/acceptor in catalysis. Residue histidine 136 participates in (S)-2,3,4,5-tetrahydrodipicolinate binding. Lysine 139 serves as the catalytic Proton donor. (S)-2,3,4,5-tetrahydrodipicolinate is bound at residue 145–146; it reads GT.

It belongs to the DapB family.

The protein localises to the cytoplasm. It carries out the reaction (S)-2,3,4,5-tetrahydrodipicolinate + NAD(+) + H2O = (2S,4S)-4-hydroxy-2,3,4,5-tetrahydrodipicolinate + NADH + H(+). It catalyses the reaction (S)-2,3,4,5-tetrahydrodipicolinate + NADP(+) + H2O = (2S,4S)-4-hydroxy-2,3,4,5-tetrahydrodipicolinate + NADPH + H(+). It functions in the pathway amino-acid biosynthesis; L-lysine biosynthesis via DAP pathway; (S)-tetrahydrodipicolinate from L-aspartate: step 4/4. Functionally, catalyzes the conversion of 4-hydroxy-tetrahydrodipicolinate (HTPA) to tetrahydrodipicolinate. The polypeptide is 4-hydroxy-tetrahydrodipicolinate reductase (Streptomyces avermitilis (strain ATCC 31267 / DSM 46492 / JCM 5070 / NBRC 14893 / NCIMB 12804 / NRRL 8165 / MA-4680)).